We begin with the raw amino-acid sequence, 47 residues long: Delta-actitoxin-Axm1d (47 aa).

Cystine bridges form between Cys-4/Cys-44, Cys-6/Cys-34, and Cys-27/Cys-45.

Belongs to the sea anemone sodium channel inhibitory toxin family. Type I subfamily.

It is found in the secreted. The protein resides in the nematocyst. Functionally, binds specifically to voltage-gated sodium channels (Nav), thereby delaying their inactivation during signal transduction. Thus it strongly stimulates mammalian cardiac muscle contraction. This Anthopleura xanthogrammica (Giant green sea anemone) protein is Delta-actitoxin-Axm1d.